The sequence spans 79 residues: Dolichyl-diphosphooligosaccharide--protein glycosyltransferase subunit TMEM258 (79 aa).

2 helical membrane-spanning segments follow: residues 19–39 and 55–75; these read PLLT…FTMI and FIAA…LLWV.

It belongs to the OST5 family. In terms of assembly, component of the oligosaccharyltransferase (OST) complex.

The protein resides in the membrane. It functions in the pathway protein modification; protein glycosylation. Its function is as follows. Subunit of the oligosaccharyl transferase (OST) complex that catalyzes the initial transfer of a defined glycan (Glc(3)Man(9)GlcNAc(2) in eukaryotes) from the lipid carrier dolichol-pyrophosphate to an asparagine residue within an Asn-X-Ser/Thr consensus motif in nascent polypeptide chains, the first step in protein N-glycosylation. N-glycosylation occurs cotranslationally and the complex associates with the Sec61 complex at the channel-forming translocon complex that mediates protein translocation across the endoplasmic reticulum (ER). All subunits are required for a maximal enzyme activity. This is Dolichyl-diphosphooligosaccharide--protein glycosyltransferase subunit TMEM258 from Caenorhabditis elegans.